The chain runs to 216 residues: Adenylate kinase (216 aa).

13–18 lines the ATP pocket; sequence GAGKGT. Residues 33–66 are NMP; it reads TTGDALRANKDMDISDMDTEYDTPREYMEAGDLV. AMP is bound by residues T34, R39, 64–66, 89–92, and Q96; these read DLV and GYPR. An LID region spans residues 125 to 162; it reads GRRVCDDCGTNYHVEFNQPEEDGVCDECGGDLIQRDDD. An ATP-binding site is contributed by R126. Zn(2+) is bound by residues C129, C132, C149, and C152. AMP is bound by residues R159 and R170. Residue Q198 coordinates ATP.

This sequence belongs to the adenylate kinase family. In terms of assembly, monomer.

The protein resides in the cytoplasm. The catalysed reaction is AMP + ATP = 2 ADP. It functions in the pathway purine metabolism; AMP biosynthesis via salvage pathway; AMP from ADP: step 1/1. Functionally, catalyzes the reversible transfer of the terminal phosphate group between ATP and AMP. Plays an important role in cellular energy homeostasis and in adenine nucleotide metabolism. This chain is Adenylate kinase, found in Haloarcula marismortui (strain ATCC 43049 / DSM 3752 / JCM 8966 / VKM B-1809) (Halobacterium marismortui).